The primary structure comprises 763 residues: Formin-like protein 4 (763 aa).

The N-terminal stretch at 1-33 is a signal peptide; sequence MAAMLMQPWPPFLPHLTLVFLTLILFFPNQSFS. The tract at residues 52–73 is disordered; sequence PPVQSPVLSPPQNPSSSSSDSD. Residues 80–100 traverse the membrane as a helical segment; sequence AVLITAASTLLVAAVFFFLVH. Disordered regions lie at residues 185–327 and 726–763; these read IYSK…DSDH and RSSMGSTQQRNAVKFPVLPPNFMSDRSRSDSGGSDSDM. Positions 205 to 225 are enriched in polar residues; sequence RSSTSHSVIHNDNYRNATTTH. The segment covering 229 to 238 has biased composition (basic and acidic residues); sequence VKTDSFEFVK. Residues 240 to 280 show a composition bias toward pro residues; it reads DPTPPPPPPPPIPVKQSATPPPPPPPKLKNNGPSPPPPPPL. A compositionally biased stretch (low complexity) spans 281-292; the sequence is KKTAALSSSASK. In terms of domain architecture, FH2 spans 303 to 738; it reads SGESSNGQVK…MGSTQQRNAV (436 aa). Positions 316–327 are enriched in basic and acidic residues; sequence LHWDKVNPDSDH. Polar residues predominate over residues 726-736; it reads RSSMGSTQQRN.

This sequence belongs to the formin-like family. Class-I subfamily. Interacts with profilin. As to expression, expressed in the whole plant (at protein level).

The protein resides in the cell membrane. Functionally, might be involved in the organization and polarity of the actin cytoskeleton. This is Formin-like protein 4 (FH4) from Arabidopsis thaliana (Mouse-ear cress).